We begin with the raw amino-acid sequence, 317 residues long: MAALLQCISHSPMKGYVDPSPAIVSDVEVAIARMRKELVDFDPEVIFLFAPDHYNGFFLDVMPQFCVGIAATSVGDYRTTPGPINVPREIARSCAEHLISNDIDVAISYRMQVDHGMVQPLEELMGGLNAYPVVPLFVNGVAPPLISIRRARLFGAAVGEYAKKLNKRCLFIGSGGLSHNPPVPQIDTATEEFAEFLIAGRNPSPERRAARQQRTKDAAIRFAAGDSQLHPINSVWDEAFMADLVNQDWGALDAYRNSEITEQAGISTHEAKSWVAAHAAMNAATSGGYMAEVRYYKAIPEWIVGYGAMAGSAEQAT.

H115 serves as the catalytic Proton donor. H179 acts as the Proton acceptor in catalysis.

It belongs to the LigB/MhpB extradiol dioxygenase family. Homotetramer. Requires Fe(2+) as cofactor.

It catalyses the reaction 3-(2,3-dihydroxyphenyl)propanoate + O2 = (2Z,4E)-2-hydroxy-6-oxonona-2,4-dienedioate + H(+). The catalysed reaction is (2E)-3-(2,3-dihydroxyphenyl)prop-2-enoate + O2 = (2Z,4E,7E)-2-hydroxy-6-oxonona-2,4,7-trienedioate + H(+). It participates in aromatic compound metabolism; 3-phenylpropanoate degradation. In terms of biological role, catalyzes the non-heme iron(II)-dependent oxidative cleavage of 2,3-dihydroxyphenylpropionic acid and 2,3-dihydroxicinnamic acid into 2-hydroxy-6-ketononadienedioate and 2-hydroxy-6-ketononatrienedioate, respectively. This Dechloromonas aromatica (strain RCB) protein is 2,3-dihydroxyphenylpropionate/2,3-dihydroxicinnamic acid 1,2-dioxygenase 2.